The sequence spans 90 residues: Small ribosomal subunit protein bS16 (90 aa).

The protein belongs to the bacterial ribosomal protein bS16 family.

In Lactobacillus helveticus (strain DPC 4571), this protein is Small ribosomal subunit protein bS16.